The sequence spans 164 residues: Photosystem II extrinsic protein V (164 aa).

An N-terminal signal peptide occupies residues 1–27 (MALKSKFLVGSILATFILNGFSSPAQA). Cys64, Cys67, His68, and His119 together coordinate heme c.

The protein belongs to the cytochrome c family. PsbV subfamily. PSII is composed of 1 copy each of membrane proteins PsbA, PsbB, PsbC, PsbD, PsbE, PsbF, PsbH, PsbI, PsbJ, PsbK, PsbL, PsbM, PsbT, PsbY, PsbZ, Psb30/Ycf12, at least 3 peripheral proteins of the oxygen-evolving complex and a large number of cofactors. It forms dimeric complexes. The cofactor is heme c.

The protein localises to the plastid. Its subcellular location is the chloroplast thylakoid membrane. Functionally, one of the extrinsic, lumenal subunits of photosystem II (PSII). PSII is a light-driven water plastoquinone oxidoreductase, using light energy to abstract electrons from H(2)O, generating a proton gradient subsequently used for ATP formation. The extrinsic proteins stabilize the structure of photosystem II oxygen-evolving complex (OEC), the ion environment of oxygen evolution and protect the OEC against heat-induced inactivation. The chain is Photosystem II extrinsic protein V from Emiliania huxleyi (Coccolithophore).